The following is a 577-amino-acid chain: Arginine--tRNA ligase (577 aa).

Positions 122 to 132 (PNVAKEMHVGH) match the 'HIGH' region motif.

It belongs to the class-I aminoacyl-tRNA synthetase family. Monomer.

The protein resides in the cytoplasm. It carries out the reaction tRNA(Arg) + L-arginine + ATP = L-arginyl-tRNA(Arg) + AMP + diphosphate. This Escherichia coli O81 (strain ED1a) protein is Arginine--tRNA ligase.